The following is a 179-amino-acid chain: PP2C-like domain-containing protein R307 (179 aa).

Residues 1-176 (MNESKRENIQ…DNVSVIIIFF (176 aa)) form the PPM-type phosphatase domain.

The protein resides in the virion. In Acanthamoeba polyphaga mimivirus (APMV), this protein is PP2C-like domain-containing protein R307.